The sequence spans 185 residues: Elongation factor P (185 aa).

The protein belongs to the elongation factor P family.

Its subcellular location is the cytoplasm. It functions in the pathway protein biosynthesis; polypeptide chain elongation. In terms of biological role, involved in peptide bond synthesis. Stimulates efficient translation and peptide-bond synthesis on native or reconstituted 70S ribosomes in vitro. Probably functions indirectly by altering the affinity of the ribosome for aminoacyl-tRNA, thus increasing their reactivity as acceptors for peptidyl transferase. This Deinococcus deserti (strain DSM 17065 / CIP 109153 / LMG 22923 / VCD115) protein is Elongation factor P.